Consider the following 100-residue polypeptide: Urease subunit gamma (100 aa).

The protein belongs to the urease gamma subunit family. As to quaternary structure, heterotrimer of UreA (gamma), UreB (beta) and UreC (alpha) subunits. Three heterotrimers associate to form the active enzyme.

It is found in the cytoplasm. It catalyses the reaction urea + 2 H2O + H(+) = hydrogencarbonate + 2 NH4(+). The protein operates within nitrogen metabolism; urea degradation; CO(2) and NH(3) from urea (urease route): step 1/1. The chain is Urease subunit gamma from Nocardia farcinica (strain IFM 10152).